Consider the following 1056-residue polypeptide: ISWI chromatin-remodeling complex ATPase CHR11 (1056 aa).

The span at 1–10 shows a compositional bias: low complexity; that stretch reads MARNSNSDEA. Disordered stretches follow at residues 1-80 and 133-175; these read MARN…SKRE and KSDG…GSGN. 2 stretches are compositionally biased toward acidic residues: residues 11–32 and 60–73; these read FSSEEEEERVKDNEEEDEEELE and PVEDDYEDEEDEEK. Residues 12 to 105 adopt a coiled-coil conformation; sequence SSEEEEERVK…QEMLESQNAS (94 aa). Over residues 141–151 the composition is skewed to basic residues; that stretch reads KKAKGRGRHAS. Positions 155–169 are enriched in acidic residues; the sequence is EEEEDEEYLKEEEDG. The Helicase ATP-binding domain occupies 201–366; it reads IRLYENGING…WALLNFLLPE (166 aa). Residue 214-221 coordinates ATP; that stretch reads DEMGLGKT. The DEAH box signature appears at 317–320; it reads DEAH. The 152-residue stretch at 494 to 645 folds into the Helicase C-terminal domain; that stretch reads LLDKLLPKLK…ALVIQQGRLA (152 aa). Disordered regions lie at residues 738 to 774 and 814 to 833; these read WNDPPKRERKRNYSESEYFKQTLRQGAPAKPKEPRIP and IDVEEPEEGGDPLTTEEVEE. The span at 815-833 shows a compositional bias: acidic residues; it reads DVEEPEEGGDPLTTEEVEE. SANT domains follow at residues 840 to 892 and 941 to 1002; these read EGFS…ERYK and QNKG…DTLI. The tract at residues 1011 to 1056 is disordered; it reads EFDERERQARKEKKLAKSATPSKRPLGRQASESPSSTKKRKHLSMR. Basic residues predominate over residues 1047-1056; it reads TKKRKHLSMR.

It belongs to the SNF2/RAD54 helicase family. ISWI subfamily. As to quaternary structure, interacts with RLT1 and RLT2. Interacts (via C-terminus) with RLT1 (via the DDT domain), RLT2 (via the DDT domain), PTM (via the DDT domain) and DDR4 (via the DDT domain). Binds to FGT1. Highly expressed in growing tissues such as inflorescence and flower meristems, young leaves and floral organs. Expressed in roots, rosette and cauline leaves, stems, flowers, inflorescences and siliques.

The protein localises to the nucleus. Functionally, possesses intrinsic ATP-dependent nucleosome-remodeling activity. Constitutes the catalytic subunit of several complexes capable of forming ordered nucleosome arrays on chromatin. Involved in the formation of nucleosome distribution patterns. Involved in nuclear proliferation during megagametogenesis and cell expansion in the sporophyte. Required for the maintenance of the plant vegetative phase. In association with RLT1 or RLT2 may prevent the early activation of the vegetative-to-reproductive transition by regulating key genes that contribute to flower timing, such as FT, SEP1, SEP3, AGL8/FUL, SOC1 and FLC. Necessary to acquire heat stress (HS) memory. In Arabidopsis thaliana (Mouse-ear cress), this protein is ISWI chromatin-remodeling complex ATPase CHR11.